We begin with the raw amino-acid sequence, 227 residues long: Ribose-5-phosphate isomerase A (227 aa).

Substrate contacts are provided by residues 26 to 29 (TGST), 82 to 85 (DGAD), and 95 to 98 (KGGG). Glu-104 serves as the catalytic Proton acceptor. Lys-122 provides a ligand contact to substrate.

Belongs to the ribose 5-phosphate isomerase family. As to quaternary structure, homodimer.

The catalysed reaction is aldehydo-D-ribose 5-phosphate = D-ribulose 5-phosphate. It participates in carbohydrate degradation; pentose phosphate pathway; D-ribose 5-phosphate from D-ribulose 5-phosphate (non-oxidative stage): step 1/1. Functionally, catalyzes the reversible conversion of ribose-5-phosphate to ribulose 5-phosphate. This is Ribose-5-phosphate isomerase A from Streptococcus pyogenes serotype M1.